A 325-amino-acid polypeptide reads, in one-letter code: Anthranilate phosphoribosyltransferase (325 aa).

5-phospho-alpha-D-ribose 1-diphosphate is bound by residues G74, 77-78, T82, 84-87, 101-109, and S113; these read GD, NVST, and KHGNVSITS. G74 lines the anthranilate pocket. S86 is a Mg(2+) binding site. Residue N104 coordinates anthranilate. Residue R159 participates in anthranilate binding. Positions 217 and 218 each coordinate Mg(2+).

The protein belongs to the anthranilate phosphoribosyltransferase family. As to quaternary structure, homodimer. Requires Mg(2+) as cofactor.

The enzyme catalyses N-(5-phospho-beta-D-ribosyl)anthranilate + diphosphate = 5-phospho-alpha-D-ribose 1-diphosphate + anthranilate. It functions in the pathway amino-acid biosynthesis; L-tryptophan biosynthesis; L-tryptophan from chorismate: step 2/5. Catalyzes the transfer of the phosphoribosyl group of 5-phosphorylribose-1-pyrophosphate (PRPP) to anthranilate to yield N-(5'-phosphoribosyl)-anthranilate (PRA). The protein is Anthranilate phosphoribosyltransferase of Thermococcus kodakarensis (strain ATCC BAA-918 / JCM 12380 / KOD1) (Pyrococcus kodakaraensis (strain KOD1)).